We begin with the raw amino-acid sequence, 140 residues long: Granulocyte-macrophage colony-stimulating factor (140 aa).

The first 17 residues, 1–17 (MWLQNLLLLGTVVCSIC), serve as a signal peptide directing secretion. Residue serine 24 is glycosylated (O-linked (GalNAc...) serine). A glycan (O-linked (GalNAc...) threonine) is linked at threonine 27. N-linked (GlcNAc...) asparagine glycosylation is found at asparagine 45, asparagine 55, and asparagine 87. 2 disulfide bridges follow: cysteine 72–cysteine 114 and cysteine 106–cysteine 139.

This sequence belongs to the GM-CSF family. In terms of assembly, monomer. The signaling GM-CSF receptor complex is a dodecamer of two head-to-head hexamers of two alpha, two beta, and two ligand subunits.

Its subcellular location is the secreted. Cytokine that stimulates the growth and differentiation of hematopoietic precursor cells from various lineages, including granulocytes, macrophages, eosinophils and erythrocytes. The protein is Granulocyte-macrophage colony-stimulating factor (CSF2) of Cavia porcellus (Guinea pig).